The primary structure comprises 284 residues: NAD kinase (284 aa).

D71 acts as the Proton acceptor in catalysis. NAD(+) contacts are provided by residues 71-72, 144-145, D174, 185-190, and Q242; these read DG, ND, and TAYNLS.

The protein belongs to the NAD kinase family. A divalent metal cation serves as cofactor.

It is found in the cytoplasm. The catalysed reaction is NAD(+) + ATP = ADP + NADP(+) + H(+). Its function is as follows. Involved in the regulation of the intracellular balance of NAD and NADP, and is a key enzyme in the biosynthesis of NADP. Catalyzes specifically the phosphorylation on 2'-hydroxyl of the adenosine moiety of NAD to yield NADP. This chain is NAD kinase, found in Sulfurimonas denitrificans (strain ATCC 33889 / DSM 1251) (Thiomicrospira denitrificans (strain ATCC 33889 / DSM 1251)).